The primary structure comprises 497 residues: Ammonium transporter Rh type C (497 aa).

At 1 to 9 the chain is on the cytoplasmic side; that stretch reads MAWNTNLRG. Residues 10–30 form a helical membrane-spanning segment; the sequence is RLPITCLILQVTMVVLFGVFV. Residues 31-61 lie on the Extracellular side of the membrane; it reads RYDIQADAHWWLEKKRKNISSDVENEFYYRY. The N-linked (GlcNAc...) asparagine glycan is linked to Asn48. Residues 62-82 traverse the membrane as a helical segment; sequence PSFEDVHAMVFVGFGFLMTYL. Residues 83 to 93 are Cytoplasmic-facing; sequence QRYGFSAVGFN. The helical transmembrane segment at 94 to 114 threads the bilayer; the sequence is FLLAAFGIQWALLMQGWFHFF. Over 115 to 125 the chain is Extracellular; sequence EEGHILLSVEN. Residues 126–145 form a helical membrane-spanning segment; it reads LIQADFCVASTCVAFGAVLG. Over 146–151 the chain is Cytoplasmic; it reads KISPMQ. The chain crosses the membrane as a helical span at residues 152–174; it reads LLIMTFFQVTLFTVNEFILLNLI. The Extracellular segment spans residues 175-179; the sequence is EAKDA. The chain crosses the membrane as a helical span at residues 180–200; the sequence is GGSMTIHTFGAYFGLTVTWIL. The Cytoplasmic segment spans residues 201–219; sequence YRKNLEQSKQRQSSVYHSD. A helical transmembrane segment spans residues 220-240; that stretch reads LFAMIGTLFLWIYWPSFNSAS. At 241–251 the chain is on the extracellular side; the sequence is SFHGDTQHRAA. A helical transmembrane segment spans residues 252–272; that stretch reads LNTYLSLAASVLTTVAVSSVI. At 273–282 the chain is on the cytoplasmic side; sequence HKKGKLDMVH. The helical transmembrane segment at 283 to 303 threads the bilayer; the sequence is IQNATLAGGVGVGTAAEMMLT. A topological domain (extracellular) is located at residue Pro304. A helical membrane pass occupies residues 305–325; it reads YGALIVGFFCGILSTLGFAYL. At 326–340 the chain is on the cytoplasmic side; sequence SPFLESRLRIQDTCG. The helical transmembrane segment at 341-361 threads the bilayer; sequence IHNLHGIPGIIGGIVGAVTAA. At 362–395 the chain is on the extracellular side; that stretch reads YSSPDVYGEPGIVHSFGFGGYKADWTKRMQGRSQ. The helical transmembrane segment at 396-416 threads the bilayer; it reads IFGLLLSLAMALVGGIIVGFI. Over 417–497 the chain is Cytoplasmic; it reads LKLPFWGQAS…ATVTSSSLVH (81 aa).

This sequence belongs to the ammonium transporter (TC 2.A.49) family. Rh subfamily. Homotrimer. In terms of processing, N-glycosylated. As to expression, expressed by connecting tubule cells and intercalated cells of the collecting duct in kidney (at protein level).

It localises to the cell membrane. The protein localises to the apical cell membrane. The enzyme catalyses NH4(+)(in) = NH4(+)(out). It carries out the reaction methylamine(out) = methylamine(in). The catalysed reaction is CO2(out) = CO2(in). In terms of biological role, ammonium transporter involved in the maintenance of acid-base homeostasis. Transports ammonium and its related derivative methylammonium across the plasma membrane of epithelial cells likely contributing to renal transepithelial ammonia transport and ammonia metabolism. Postulated to primarily mediate an electroneutral bidirectional transport of NH3 ammonia species according to a mechanism that implies interaction of an NH4(+) ion with acidic residues of the pore entry followed by dissociation of NH4(+) into NH3 and H(+). As a result NH3 transits through the central pore and is protonated on the extracellular side reforming NH4(+). May act as a CO2 channel providing for renal acid secretion. This is Ammonium transporter Rh type C (Rhcg) from Rattus norvegicus (Rat).